The sequence spans 483 residues: Membrane-bound lytic murein transglycosylase F (483 aa).

Residues 1 to 18 form the signal peptide; it reads MKGLVIRISVALALLLWA. The interval 19–270 is non-LT domain; the sequence is VDMVFPWQQI…RIEEKYFSHI (252 aa). Positions 272-483 are LT domain; sequence QFDYVDIKSY…IMITPQNSQD (212 aa). The active site involves E315.

In the N-terminal section; belongs to the bacterial solute-binding protein 3 family. It in the C-terminal section; belongs to the transglycosylase Slt family.

Its subcellular location is the cell outer membrane. It carries out the reaction Exolytic cleavage of the (1-&gt;4)-beta-glycosidic linkage between N-acetylmuramic acid (MurNAc) and N-acetylglucosamine (GlcNAc) residues in peptidoglycan, from either the reducing or the non-reducing ends of the peptidoglycan chains, with concomitant formation of a 1,6-anhydrobond in the MurNAc residue.. Its function is as follows. Murein-degrading enzyme that degrades murein glycan strands and insoluble, high-molecular weight murein sacculi, with the concomitant formation of a 1,6-anhydromuramoyl product. Lytic transglycosylases (LTs) play an integral role in the metabolism of the peptidoglycan (PG) sacculus. Their lytic action creates space within the PG sacculus to allow for its expansion as well as for the insertion of various structures such as secretion systems and flagella. The polypeptide is Membrane-bound lytic murein transglycosylase F (Actinobacillus succinogenes (strain ATCC 55618 / DSM 22257 / CCUG 43843 / 130Z)).